Reading from the N-terminus, the 207-residue chain is 8-oxoguanine DNA glycosylase/AP lyase (207 aa).

Active-site residues include lysine 128 and aspartate 146.

It belongs to the type-2 OGG1 family.

It catalyses the reaction 2'-deoxyribonucleotide-(2'-deoxyribose 5'-phosphate)-2'-deoxyribonucleotide-DNA = a 3'-end 2'-deoxyribonucleotide-(2,3-dehydro-2,3-deoxyribose 5'-phosphate)-DNA + a 5'-end 5'-phospho-2'-deoxyribonucleoside-DNA + H(+). Its function is as follows. Catalyzes the excision of an oxidatively damaged form of guanine (7,8-dihydro-8-oxoguanine = 8-oxoG) from DNA. Also cleaves the DNA backbone at apurinic/apyrimidinic sites (AP sites). This is 8-oxoguanine DNA glycosylase/AP lyase from Saccharolobus islandicus (strain L.S.2.15 / Lassen #1) (Sulfolobus islandicus).